The sequence spans 189 residues: Protein shisa-like-2A (189 aa).

The next 2 helical transmembrane spans lie at 48 to 68 (SFFP…LVGL) and 70 to 90 (TAAV…YLFI). The disordered stretch occupies residues 98-189 (LDPGLSLQTT…PTPGPHGPVP (92 aa)). The span at 140–171 (NTHLESNKKQTVSPTCLPQNQFMATVTASNIP) shows a compositional bias: polar residues.

This sequence belongs to the shisa family.

The protein localises to the membrane. In Mus musculus (Mouse), this protein is Protein shisa-like-2A (Shisal2a).